Consider the following 209-residue polypeptide: Glycerol-3-phosphate acyltransferase (209 aa).

The next 5 membrane-spanning stretches (helical) occupy residues 8–28 (NVLF…YILA), 78–98 (VLVL…LIGI), 124–144 (VLLV…LIVA), 149–169 (ISSL…FIVH), and 170–190 (PDMP…IIFY).

The protein belongs to the PlsY family. As to quaternary structure, probably interacts with PlsX.

It is found in the cell inner membrane. The catalysed reaction is an acyl phosphate + sn-glycerol 3-phosphate = a 1-acyl-sn-glycero-3-phosphate + phosphate. It participates in lipid metabolism; phospholipid metabolism. In terms of biological role, catalyzes the transfer of an acyl group from acyl-phosphate (acyl-PO(4)) to glycerol-3-phosphate (G3P) to form lysophosphatidic acid (LPA). This enzyme utilizes acyl-phosphate as fatty acyl donor, but not acyl-CoA or acyl-ACP. This chain is Glycerol-3-phosphate acyltransferase, found in Nitratiruptor sp. (strain SB155-2).